The sequence spans 212 residues: Glycerol-3-phosphate acyltransferase (212 aa).

5 consecutive transmembrane segments (helical) span residues 3 to 23, 51 to 71, 78 to 98, 115 to 135, and 139 to 159; these read ILLA…VVVS, KAAI…VWLA, DVAV…PVFF, AVHP…AFFF, and SLAA…LFGT.

The protein belongs to the PlsY family. As to quaternary structure, probably interacts with PlsX.

It localises to the cell inner membrane. The enzyme catalyses an acyl phosphate + sn-glycerol 3-phosphate = a 1-acyl-sn-glycero-3-phosphate + phosphate. Its pathway is lipid metabolism; phospholipid metabolism. In terms of biological role, catalyzes the transfer of an acyl group from acyl-phosphate (acyl-PO(4)) to glycerol-3-phosphate (G3P) to form lysophosphatidic acid (LPA). This enzyme utilizes acyl-phosphate as fatty acyl donor, but not acyl-CoA or acyl-ACP. In Burkholderia ambifaria (strain MC40-6), this protein is Glycerol-3-phosphate acyltransferase.